The sequence spans 271 residues: Signal recognition particle receptor subunit beta (271 aa).

A helical membrane pass occupies residues 37–57 (LLSVVVAVLAVLLTLVFWKLI). GTP is bound by residues 71–79 (GLCDSGKTL) and 92–95 (TQTS). The residue at position 112 (Ser-112) is a Phosphoserine. A GTP-binding site is contributed by Gly-120. Thr-214 is subject to Phosphothreonine. Position 248 (Ala-248) interacts with GTP.

The protein belongs to the SRP receptor beta subunit family. As to quaternary structure, heterodimer with SRPRA.

Its subcellular location is the endoplasmic reticulum membrane. In terms of biological role, component of the signal recognition particle (SRP) complex receptor (SR). Ensures, in conjunction with the SRP complex, the correct targeting of the nascent secretory proteins to the endoplasmic reticulum membrane system. May mediate the membrane association of SR. The chain is Signal recognition particle receptor subunit beta (SRPRB) from Homo sapiens (Human).